Consider the following 254-residue polypeptide: MNSFGGRRRETAGPKGRRAHRPPQDQDRDVQLSKALSYALRHGALKLGLPMGADGFVPLDALLQLPQFRSFSAEDVQRVVDTNVKQRFALQPGDPSTGPLIRANQGHSLQVPELELEPLETPQALPLMLVHGTFRQHWPSILLKGLSCRGRTHIHLAPGLPGDPGVISGMRPNCEVAVFINGPLALADGIPFFRSTNGVILTPGNADGVLPPKYFKEALQLRPTRKPLSLAGNEEKEHQRDSKHSSRGRGMTQQ.

M1 bears the N-acetylmethionine mark. Disordered stretches follow at residues 1-30 (MNSF…DRDV) and 225-254 (RKPL…MTQQ). Residues 233–244 (NEEKEHQRDSKH) show a composition bias toward basic and acidic residues.

It belongs to the KptA/TPT1 family.

The catalysed reaction is 2'-phospho-[ligated tRNA] + NAD(+) = mature tRNA + ADP-alpha-D-ribose 1'',2''-cyclic phosphate + nicotinamide. In terms of biological role, catalyzes the last step of tRNA splicing, the transfer of the splice junction 2'-phosphate from ligated tRNA to NAD to produce ADP-ribose 1''-2'' cyclic phosphate. This Bos taurus (Bovine) protein is tRNA 2'-phosphotransferase 1 (TRPT1).